The primary structure comprises 231 residues: MKFGVLIFPGSNCDHDAHWVLGQVAKQPVTFLWHESHDLENCDAIVVPGGFAYGDYLRTGAIAKFSPVMEAVRKFADKGGLVIGICNGFQILTESGLLPGALLRNEGLKYICKPVNIRVETTDAPFTQGLKKGEVLQVPIGHMEGNYVCDDATLAELKKQDRIVFRYATPDGQITREANPNGSIENIAGICNEGRNVLGMMPHPERASENELGMTDGFRIFESMVGAMAKR.

The region spanning 3–231 is the Glutamine amidotransferase type-1 domain; sequence FGVLIFPGSN…ESMVGAMAKR (229 aa). The Nucleophile role is filled by cysteine 86. Active-site residues include histidine 203 and glutamate 205.

In terms of assembly, part of the FGAM synthase complex composed of 1 PurL, 1 PurQ and 2 PurS subunits.

It localises to the cytoplasm. It carries out the reaction N(2)-formyl-N(1)-(5-phospho-beta-D-ribosyl)glycinamide + L-glutamine + ATP + H2O = 2-formamido-N(1)-(5-O-phospho-beta-D-ribosyl)acetamidine + L-glutamate + ADP + phosphate + H(+). The enzyme catalyses L-glutamine + H2O = L-glutamate + NH4(+). It participates in purine metabolism; IMP biosynthesis via de novo pathway; 5-amino-1-(5-phospho-D-ribosyl)imidazole from N(2)-formyl-N(1)-(5-phospho-D-ribosyl)glycinamide: step 1/2. Part of the phosphoribosylformylglycinamidine synthase complex involved in the purines biosynthetic pathway. Catalyzes the ATP-dependent conversion of formylglycinamide ribonucleotide (FGAR) and glutamine to yield formylglycinamidine ribonucleotide (FGAM) and glutamate. The FGAM synthase complex is composed of three subunits. PurQ produces an ammonia molecule by converting glutamine to glutamate. PurL transfers the ammonia molecule to FGAR to form FGAM in an ATP-dependent manner. PurS interacts with PurQ and PurL and is thought to assist in the transfer of the ammonia molecule from PurQ to PurL. This Koribacter versatilis (strain Ellin345) protein is Phosphoribosylformylglycinamidine synthase subunit PurQ.